The following is a 2586-amino-acid chain: Vitellogenin (2586 aa).

The N-terminal stretch at 1–18 is a signal peptide; sequence MTTSTLLFVLAFVAGGLA. The region spanning 42-653 is the Vitellogenin domain; it reads YQPDKTYAYA…APGSFVPRAV (612 aa). Cystine bridges form between cysteine 170/cysteine 194 and cysteine 2378/cysteine 2515. The 164-residue stretch at 2353–2516 folds into the VWFD domain; sequence RTATVVGGSE…AAWQEDRQCS (164 aa).

Post-translationally, glycosylated. In terms of processing, may be modified covalently by lipidation. As to expression, expressed in the ovary and hepatopancrease of vitellogenic females. Not expressed in the muscle, heart and intestine of female or in the hepatopancrease of the male. Detected in the ovary and hemolymph of female (at protein level). Not detected in the female hepatopancreas or in the male hemolymph and testis (at protein level).

Functionally, precursor of the egg-yolk proteins that are sources of nutrients during embryonic development. This chain is Vitellogenin, found in Penaeus merguiensis (Banana prawn).